The sequence spans 299 residues: tRNA uridine(34) hydroxylase (299 aa).

Positions 132 to 226 (ASRPVVMLDT…YFEEVGGAHY (95 aa)) constitute a Rhodanese domain. Cys-186 acts as the Cysteine persulfide intermediate in catalysis.

It belongs to the TrhO family.

The catalysed reaction is uridine(34) in tRNA + AH2 + O2 = 5-hydroxyuridine(34) in tRNA + A + H2O. Its function is as follows. Catalyzes oxygen-dependent 5-hydroxyuridine (ho5U) modification at position 34 in tRNAs. The polypeptide is tRNA uridine(34) hydroxylase (Burkholderia pseudomallei (strain K96243)).